The following is a 236-amino-acid chain: MTRRYWNINLEEMMEAGVHFGHGTRKWNPKMAPYISAKRKGIHITNLTRTARFLSEACDLVFDAASRGKQFLIVGTKNKEADSVAWAAIRARCHYVNKKWLGGMLTNWSTTETRLHKFRDLRTEQKTGGLDRLPKRDAAMLKRQLSHLQTYLGGIKYMTGLPDIVIIVDQHEEYTALQECITLGIPTICLIDTNCDPDLADISIPANDDAISSIRLILNKLVFAICEGRSGYIRNP.

It belongs to the universal ribosomal protein uS2 family.

Its subcellular location is the plastid. It is found in the chloroplast. The sequence is that of Small ribosomal subunit protein uS2c (rps2) from Lactuca sativa (Garden lettuce).